Consider the following 499-residue polypeptide: Potassium voltage-gated channel subfamily A member 2 (499 aa).

The disordered stretch occupies residues 1-27 (MTVATGDLTDGSVGFAGHPQDSYDPEP). Residues 1–125 (MTVATGDLTD…YELGEEAMEI (125 aa)) form a tetramerization domain region. At 1-160 (MTVATGDLTD…LLFEYPESSG (160 aa)) the chain is on the cytoplasmic side. Residues 161-182 (PARIIAIISVTVILISIVSFCL) traverse the membrane as a helical segment. Over 183 to 221 (ETLPVFRDENEDMHGSGGNYYSYPNSTVRFQKSNTFTDP) the chain is Extracellular. Asn207 is a glycosylation site (N-linked (GlcNAc...) asparagine). The helical transmembrane segment at 222–243 (FFIVETLCIIWFSFEFLVRFLA) threads the bilayer. Residue Cys244 is the site of S-palmitoyl cysteine attachment. Over 244–254 (CPSKAVFFTNL) the chain is Cytoplasmic. The chain crosses the membrane as a helical span at residues 255-275 (MNIIDIVAIIPYFITLGTELA). Over 276-289 (EKTEDGQQGQQAMS) the chain is Extracellular. A helical; Voltage-sensor membrane pass occupies residues 290-310 (LAILRVIRLVRVFRIFKLSRH). Topologically, residues 311–325 (SKGLQILGQTLNASM) are cytoplasmic. The segment at 312-325 (KGLQILGQTLNASM) is S4-S5 linker. The helical transmembrane segment at 326–347 (RELGLLIFFLFIGVILFSSAVF) threads the bilayer. The Extracellular segment spans residues 348–361 (FAEADERDSQFPSI). An intramembrane region (helical) is located at residues 362 to 373 (PDAFWWAVVSMT). The Selectivity filter motif lies at 374 to 379 (TVGYGD). Residues 374–381 (TVGYGDMV) lie within the membrane without spanning it. Residues 382-388 (PTTIGGK) lie on the Extracellular side of the membrane. A helical transmembrane segment spans residues 389 to 417 (IVGSLCAIAGVLTIALPVPVIVSNFNYFY). At 418 to 499 (HRETEGEEQA…VNITKMLTDV (82 aa)) the chain is on the cytoplasmic side. Residues 497–499 (TDV) carry the PDZ-binding motif.

Belongs to the potassium channel family. A (Shaker) (TC 1.A.1.2) subfamily. Kv1.2/KCNA2 sub-subfamily. As to quaternary structure, homotetramer and heterotetramer with other family members. As to expression, detected in tadpole brain and spinal cord.

The protein localises to the cell membrane. The catalysed reaction is K(+)(in) = K(+)(out). Functionally, voltage-gated potassium channel that mediates transmembrane potassium transport in excitable membranes, primarily in the brain and central nervous system. Prevents aberrant action potential firing and regulates neuronal output. Forms tetrameric potassium-selective channels through which potassium ions pass in accordance with their electrochemical gradient. The channel alternates between opened and closed conformations in response to the voltage difference across the membrane. Can form functional homotetrameric channels and heterotetrameric channels with other family members; the channels characteristics depend critically on the types of channel-forming alpha subunits that are present. Channel properties are modulated by cytoplasmic beta subunits that regulate the subcellular location of the alpha subunits. In vivo, membranes probably contain a mixture of heteromeric potassium channel complexes, making it difficult to assign currents observed in intact tissues to any particular potassium channel family member. Homotetrameric KCNA2 forms a delayed-rectifier potassium channel that opens in response to membrane depolarization, followed by slow spontaneous channel closure. Regulates neuronal excitability and plays a role as pacemaker in the regulation of neuronal action potentials. KCNA2-containing channels play a presynaptic role and prevent hyperexcitability and aberrant action potential firing. Response to toxins that are selective for KCNA2-containing potassium channels suggests that in Purkinje cells, dendritic subthreshold KCNA2-containing potassium channels prevent random spontaneous calcium spikes, suppressing dendritic hyperexcitability without hindering the generation of somatic action potentials, and thereby play an important role in motor coordination. Plays a role in the induction of long-term potentiation of neuron excitability in the CA3 layer of the hippocampus. The chain is Potassium voltage-gated channel subfamily A member 2 (kcna2) from Xenopus laevis (African clawed frog).